Here is a 180-residue protein sequence, read N- to C-terminus: Signal peptidase complex subunit 3 (180 aa).

The Cytoplasmic portion of the chain corresponds to 1-12 (MHNLLSRANALL). The chain crosses the membrane as a helical; Signal-anchor for type II membrane protein span at residues 13-33 (AFTLWVMAAVTAACFLSTVFL). At 34–180 (DYTVPTKLTV…PTTYTTTRRS (147 aa)) the chain is on the lumenal side. N-linked (GlcNAc...) asparagine glycosylation is present at Asn-141.

The protein belongs to the SPCS3 family. Component of the signal peptidase complex (SPC) composed of a catalytic subunit sec-11 and three accessory subunits spcs-1, spcs-2 and spcs-3. The complex induces a local thinning of the ER membrane which is used to measure the length of the signal peptide (SP) h-region of protein substrates. This ensures the selectivity of the complex towards h-regions shorter than 18-20 amino acids.

It localises to the endoplasmic reticulum membrane. Essential component of the signal peptidase complex (SPC) which catalyzes the cleavage of N-terminal signal sequences from nascent proteins as they are translocated into the lumen of the endoplasmic reticulum. Essential for the SPC catalytic activity, possibly by stabilizing and positioning the active center of the complex close to the lumenal surface. This is Signal peptidase complex subunit 3 from Caenorhabditis elegans.